The sequence spans 382 residues: D-galactonate dehydratase (382 aa).

Aspartate 183 is a Mg(2+) binding site. Catalysis depends on histidine 185, which acts as the Proton donor. The Mg(2+) site is built by glutamate 209 and glutamate 235. Residue histidine 285 is the Proton acceptor of the active site.

It belongs to the mandelate racemase/muconate lactonizing enzyme family. GalD subfamily. The cofactor is Mg(2+).

It carries out the reaction D-galactonate = 2-dehydro-3-deoxy-D-galactonate + H2O. It functions in the pathway carbohydrate acid metabolism; D-galactonate degradation; D-glyceraldehyde 3-phosphate and pyruvate from D-galactonate: step 1/3. Catalyzes the dehydration of D-galactonate to 2-keto-3-deoxy-D-galactonate. This chain is D-galactonate dehydratase, found in Salmonella choleraesuis (strain SC-B67).